The following is a 179-amino-acid chain: MQSEMHPELAKLSFLLGRWEGLGVAGYPDTEEFQFTQVIEFTHDGHPHLNYRSQVWRVNEDGSRGEPVTSESGYWRVRTGKAAQQEDPDQPPIHVEVLISHPEGYSEVYLGTVFAHRVELHTDVVVRTETGLPAAASHRLYGLFGDNRETLGYAWDLAANSKELQPYMSAQLQRVDRKS.

The GXWXGXG motif lies at 17–23; that stretch reads GRWEGLG.

It belongs to the nitrobindin family.

This chain is Ferric nitrobindin-like protein, found in Thermobifida fusca (strain YX).